Here is a 309-residue protein sequence, read N- to C-terminus: Taste receptor type 2 member 8 (309 aa).

The Extracellular portion of the chain corresponds to 1–7 (MFSPADN). Residues 8 to 28 (IFIILITGEFIIGILGNGYIG) traverse the membrane as a helical segment. The Cytoplasmic segment spans residues 29-50 (LVNWIDWIKKKKISTIDCILTN). Residues 51–71 (LVISRICLISVMVVNGIVIVL) form a helical membrane-spanning segment. Topologically, residues 72 to 82 (YPDVYTKTKLQ) are extracellular. Residues 83 to 103 (IVICTFWTFANYLNMWFTACL) form a helical membrane-spanning segment. Topologically, residues 104–131 (NVFYSLKVANSSHPLFLWLKRKIDMVVR) are cytoplasmic. The helical transmembrane segment at 132-152 (WILLGCFAISLLVSLIIATVL) threads the bilayer. The Extracellular portion of the chain corresponds to 153 to 184 (SHDYRFHAIAKHKRNVTEMFHVSKMPYFEPLT). A glycan (N-linked (GlcNAc...) asparagine) is linked at Asn-167. Residues 185–205 (LFNLLAIVPFIVSLMSFFLLV) traverse the membrane as a helical segment. The Cytoplasmic segment spans residues 206 to 239 (RSLWRHTKQIKLYATGGRDPSTEAHVRAIKTMTL). The helical transmembrane segment at 240 to 260 (LIFFFFLYYITSLLVXFSYLI) threads the bilayer. Over 261 to 266 (TNYKLA) the chain is Extracellular. A helical transmembrane segment spans residues 267 to 287 (MAFGEIVAILYPSGHSLILII). The Cytoplasmic portion of the chain corresponds to 288 to 309 (LNNKLRQASVRMLTCRKIACVT).

The protein belongs to the G-protein coupled receptor T2R family.

It is found in the membrane. Its function is as follows. Receptor that may play a role in the perception of bitterness and is gustducin-linked. May play a role in sensing the chemical composition of the gastrointestinal content. The activity of this receptor may stimulate alpha gustducin, mediate PLC-beta-2 activation and lead to the gating of TRPM5. The polypeptide is Taste receptor type 2 member 8 (TAS2R8) (Papio hamadryas (Hamadryas baboon)).